We begin with the raw amino-acid sequence, 187 residues long: Large ribosomal subunit protein bL9 (187 aa).

The tract at residues Ala155 to Ala187 is disordered. Residues Glu166 to Ala187 are compositionally biased toward acidic residues.

This sequence belongs to the bacterial ribosomal protein bL9 family.

Its function is as follows. Binds to the 23S rRNA. The sequence is that of Large ribosomal subunit protein bL9 from Rhodospirillum centenum (strain ATCC 51521 / SW).